A 130-amino-acid chain; its full sequence is Small ribosomal subunit protein uS11 (130 aa).

It belongs to the universal ribosomal protein uS11 family. In terms of assembly, part of the 30S ribosomal subunit. Interacts with proteins S7 and S18. Binds to IF-3.

Located on the platform of the 30S subunit, it bridges several disparate RNA helices of the 16S rRNA. Forms part of the Shine-Dalgarno cleft in the 70S ribosome. This is Small ribosomal subunit protein uS11 from Prochlorococcus marinus (strain MIT 9215).